The chain runs to 2159 residues: Calpain-type cysteine protease DEK1 (2159 aa).

A signal peptide spans 1–33 (MEGEGHHGVVLACSICGFLFAVLSPFSFWVLWA). At 34 to 70 (VNWRPWRLYSWIYARKWPTYVQGPQLSTLCSLLTLCA) the chain is on the extracellular side. The chain crosses the membrane as a helical span at residues 71–91 (WLVVISPIAVLLVWGSVLIAL). Over 92 to 95 (MERN) the chain is Cytoplasmic. A helical transmembrane segment spans residues 96 to 116 (IIGLAVIMAGVALLLSFYSIM). Over 117-127 (LWWRTQWQSSE) the chain is Extracellular. A helical transmembrane segment spans residues 128 to 148 (AVAYLLLLAVCLLCAYDFCAI). The Cytoplasmic portion of the chain corresponds to 149 to 164 (YVTAGASASELNSPSG). The helical transmembrane segment at 165–185 (FFFGVSVISLAINMLFICKIL) threads the bilayer. Over 186–236 (FNVSGFDVDEYVRRSYKFAYSDCVEVAPVSCSPEPPDPSELYMTKSSRVKH) the chain is Extracellular. The chain crosses the membrane as a helical span at residues 237–257 (LGLLYISSLLVLVGYSILYGL). Residues 258-264 (TSKEARW) are Cytoplasmic-facing. The helical transmembrane segment at 265–285 (LGALTSVAVVILDWNLGLCSF) threads the bilayer. Over 286 to 294 (RFELLKSRM) the chain is Extracellular. The chain crosses the membrane as a helical span at residues 295 to 315 (IVLFVAGTSRAFLVSFGVHYW). Residues 316–320 (YLGHC) lie on the Cytoplasmic side of the membrane. The chain crosses the membrane as a helical span at residues 321-341 (ISYAFVASVLLSAAVSSWLSI). The Extracellular segment spans residues 342–623 (SNPSVARIDA…LIFHHLAGSP (282 aa)). A disordered region spans residues 365–409 (RKGQNSSSNSSEGCGSSVKRSSGSVEAGQNGNAMDSMYRSNSQSD). Positions 369–381 (NSSSNSSEGCGSS) are enriched in low complexity. Polar residues predominate over residues 382-409 (VKRSSGSVEAGQNGNAMDSMYRSNSQSD). The chain crosses the membrane as a helical span at residues 624 to 644 (IRAFIVFTVMFIIETATVAIY). The Cytoplasmic portion of the chain corresponds to 645–660 (RPETIKVINATHEQFE). The chain crosses the membrane as a helical span at residues 661–681 (FGFSILLLSPVVCSIMAFIWS). The Extracellular portion of the chain corresponds to 682 to 694 (LRAEEMLMTSKPQ). The helical transmembrane segment at 695–715 (KYGFIAWLLSTCVGLFLSFLS) threads the bilayer. The Cytoplasmic portion of the chain corresponds to 716 to 719 (KSSV). Residues 720–740 (ILGLSLTVPLMVACLSFAVPI) traverse the membrane as a helical segment. Topologically, residues 741 to 770 (WIRNGYSFWIPGREFANRENVSQAPGEKER) are extracellular. Residues 771-791 (ALFVITIAVFTASIIGLGAIV) traverse the membrane as a helical segment. Topologically, residues 792–822 (SAKPLDALGYKGWDADKNSSYSPYATSMYLG) are cytoplasmic. A helical transmembrane segment spans residues 823 to 843 (WALSSTIAVITTGLIPIVAWF). The Extracellular segment spans residues 844–853 (ATYRFSPSSA). A helical transmembrane segment spans residues 854 to 874 (ICVGLFATVLVSFCGASYWGV). Topologically, residues 875-887 (VNSREDGVPLKAD) are cytoplasmic. The chain crosses the membrane as a helical span at residues 888 to 908 (FLAALLPLLCIPAFFSLFTGL). Over 909 to 921 (YKWKDDDWKISRG) the chain is Extracellular. A helical membrane pass occupies residues 922-942 (VYLFVGMGMLLLFGAVAAVIV). Residues 943 to 946 (TIRP) are Cytoplasmic-facing. Residues 947 to 967 (WTVGVACLVAILFLVFVIGVI) form a helical membrane-spanning segment. The Extracellular segment spans residues 968-981 (HYWTSNNFYLTRTQ). The chain crosses the membrane as a helical span at residues 982–1002 (MLLVCSIAFLLALAAFLMGLF). The Cytoplasmic segment spans residues 1003–1016 (HGKPFVGASIGYFS). The chain crosses the membrane as a helical span at residues 1017–1037 (FIFLLTGRALTVLLSPPIVVY). Residues 1038-1060 (SPRVLPVYVYDAHADSAKNVSYA) lie on the Extracellular side of the membrane. The helical transmembrane segment at 1061–1081 (FLILYGIALATEVWGVIASLI) threads the bilayer. Topologically, residues 1082–2159 (MNPPFVGAGV…SKASIRLEAV (1078 aa)) are cytoplasmic. Phosphoserine is present on residues serine 1371 and serine 1376. Positions 1417-1609 (TGRHCGELDL…MSPAEYGFFD (193 aa)) constitute a Calpain catalytic 1 domain. Phosphoserine is present on serine 1665. The Calpain catalytic 2 domain maps to 1703–2005 (NFTDQEFPPE…FRSIYVCRVY (303 aa)). Catalysis depends on residues cysteine 1769, histidine 1927, and asparagine 1947.

The protein belongs to the peptidase C2 family. Post-translationally, autocatalytic proteolytic cleavage leading to the production of mainly cytoplasmic localized subproducts of about 85 and 120 kDa. In terms of tissue distribution, expressed in most tissues at low levels ranging from 30 to 55 ppm. Present in all endosperm cells at transcript level, but confined to aleurones at protein level.

It localises to the endoplasmic reticulum membrane. The protein resides in the cytoplasm. Its subcellular location is the cell membrane. The protein localises to the endosome membrane. Essential protease involved in epiderm development. Required for aleurone cell development in the endosperm probably by maintaining and restricting the aleurone and embryonic epidermal L1 cell-layer fates as well as meristems organization. Involved in the maintenance of adaxial/abaxial axis information in developing leaves, probably by regulating cell proliferation and expansion. Does not need calcium ions to be active. The chain is Calpain-type cysteine protease DEK1 (DEK1) from Zea mays (Maize).